Here is a 416-residue protein sequence, read N- to C-terminus: Serine/threonine transporter SstT (416 aa).

9 helical membrane passes run 15–35 (SLVSQILVGLVFGILLAMFMP), 49–69 (VGALKAVAPLLVFVLVMAAII), 82–102 (ILLLYLLGTFLAAAVAVVASF), 141–161 (ALMDANYIGILAWAIGLGIAM), 192–212 (LGILGLVASTLAETGFDALFG), 217–237 (LVVLIGCMLFIAFVVNPIIVF), 288–308 (VSIPLGATINMAGAAITITVL), 330–350 (VVATISACGASGVAGGSLLLI), and 356–376 (LFGIGNDIAMQVVAVGFIIGV).

It belongs to the dicarboxylate/amino acid:cation symporter (DAACS) (TC 2.A.23) family.

It localises to the cell inner membrane. It carries out the reaction L-serine(in) + Na(+)(in) = L-serine(out) + Na(+)(out). It catalyses the reaction L-threonine(in) + Na(+)(in) = L-threonine(out) + Na(+)(out). In terms of biological role, involved in the import of serine and threonine into the cell, with the concomitant import of sodium (symport system). The chain is Serine/threonine transporter SstT from Aeromonas salmonicida (strain A449).